The chain runs to 58 residues: Large ribosomal subunit protein bL32 (58 aa).

It belongs to the bacterial ribosomal protein bL32 family.

In Sulfurihydrogenibium sp. (strain YO3AOP1), this protein is Large ribosomal subunit protein bL32.